The following is a 29-amino-acid chain: Cyclotide mden-B (29 aa).

The segment at residues 1–29 is a cross-link (cyclopeptide (Gly-Asn)); it reads GLPICGETCFTGKCYTPGCTCSYPICKKN. Cystine bridges form between cysteine 5/cysteine 19, cysteine 9/cysteine 21, and cysteine 14/cysteine 26.

It belongs to the cyclotide family. Moebius subfamily. This is a cyclic peptide.

Probably participates in a plant defense mechanism. The polypeptide is Cyclotide mden-B (Melicytus dentatus (Tree violet)).